We begin with the raw amino-acid sequence, 550 residues long: MDTKRLIVFIVLSFGLLFVWQEYFAPKPQPKPVAAAVQPDGTPAPATARPADSPATGKLTSAQTITVTTDLVKAQINTAGGDIRSLELLTQGAIDNPDKPFMLMTEQGGRTYVAQSGLLSSDASLPTHKTLYAADKTAYTLLPDQNTLTVTLAAAPVNGVEVKKIFTFKRDSYVIDVRYDIINHSDKPVDATAYYRLLRDGKAPEGESSMAHTFTGPAVYTETGKFQKVSFEDLAKGKGDYVRQADNGWVAMVQHYFVSAWILKTNDGKSVCSSAEACQFELKPAAGDLYSAGVLVKLPVVAAGQQYSIDMPLYAGPEDTRRMATVAPGLVLTKDYGWVTIIATPLFWLLDKLYGLVHNWGWAIVLLTVLVKAAFYPLSAASYRSMAKMKALAPRMQRLKEQYGDDRQKFQQATMEMYKTEKVNPLGGCLPIVVQIPVFIGLYWALLASVELRQAPWILWIHDLAKPDPYYILPALMAATMYLQTFLNPPPADPLQAKMMKIMPLAFSVMFFFFPAGLVLYWLVNNILSIAQQWWVNKQIEKDAAKAKSS.

Residues 6–26 form a helical membrane-spanning segment; that stretch reads LIVFIVLSFGLLFVWQEYFAP. Residues 30–59 form a disordered region; the sequence is PKPVAAAVQPDGTPAPATARPADSPATGKL. 4 helical membrane-spanning segments follow: residues 360 to 380, 430 to 450, 472 to 492, and 504 to 524; these read WGWAIVLLTVLVKAAFYPLSA, LPIVVQIPVFIGLYWALLASV, ILPALMAATMYLQTFLNPPPA, and PLAFSVMFFFFPAGLVLYWLV.

It belongs to the OXA1/ALB3/YidC family. Type 1 subfamily. In terms of assembly, interacts with the Sec translocase complex via SecD. Specifically interacts with transmembrane segments of nascent integral membrane proteins during membrane integration.

Its subcellular location is the cell inner membrane. Functionally, required for the insertion and/or proper folding and/or complex formation of integral membrane proteins into the membrane. Involved in integration of membrane proteins that insert both dependently and independently of the Sec translocase complex, as well as at least some lipoproteins. Aids folding of multispanning membrane proteins. This chain is Membrane protein insertase YidC, found in Laribacter hongkongensis (strain HLHK9).